A 482-amino-acid chain; its full sequence is tRNA sulfurtransferase (482 aa).

The region spanning 61–165 is the THUMP domain; that stretch reads AAIVAELTRI…DERLILVTAR (105 aa). ATP is bound by residues 183–184, lysine 265, glycine 287, and glutamine 296; that span reads LI. A disulfide bond links cysteine 344 and cysteine 456. The Rhodanese domain maps to 404–482; that stretch reads FSHNDVILDI…GFKNVKVYRP (79 aa). The Cysteine persulfide intermediate role is filled by cysteine 456.

Belongs to the ThiI family.

It localises to the cytoplasm. The catalysed reaction is [ThiI sulfur-carrier protein]-S-sulfanyl-L-cysteine + a uridine in tRNA + 2 reduced [2Fe-2S]-[ferredoxin] + ATP + H(+) = [ThiI sulfur-carrier protein]-L-cysteine + a 4-thiouridine in tRNA + 2 oxidized [2Fe-2S]-[ferredoxin] + AMP + diphosphate. It carries out the reaction [ThiS sulfur-carrier protein]-C-terminal Gly-Gly-AMP + S-sulfanyl-L-cysteinyl-[cysteine desulfurase] + AH2 = [ThiS sulfur-carrier protein]-C-terminal-Gly-aminoethanethioate + L-cysteinyl-[cysteine desulfurase] + A + AMP + 2 H(+). It participates in cofactor biosynthesis; thiamine diphosphate biosynthesis. In terms of biological role, catalyzes the ATP-dependent transfer of a sulfur to tRNA to produce 4-thiouridine in position 8 of tRNAs, which functions as a near-UV photosensor. Also catalyzes the transfer of sulfur to the sulfur carrier protein ThiS, forming ThiS-thiocarboxylate. This is a step in the synthesis of thiazole, in the thiamine biosynthesis pathway. The sulfur is donated as persulfide by IscS. This is tRNA sulfurtransferase from Erwinia tasmaniensis (strain DSM 17950 / CFBP 7177 / CIP 109463 / NCPPB 4357 / Et1/99).